The following is an 84-amino-acid chain: U4-theraphotoxin-Hhn1a (84 aa).

A signal peptide spans 1 to 22 (MKVTLIAIPTCAAVLVLHTTAA). Residues 23–47 (EELEESQLMEVGMPDTELAAVDEER) constitute a propeptide that is removed on maturation. 3 disulfide bridges follow: Cys51–Cys65, Cys55–Cys76, and Cys70–Cys81.

This sequence belongs to the neurotoxin 12 (Hwtx-2) family. 02 (Hwtx-2) subfamily. In terms of tissue distribution, expressed by the venom gland.

It is found in the secreted. In terms of biological role, postsynaptic neurotoxin. The chain is U4-theraphotoxin-Hhn1a from Cyriopagopus hainanus (Chinese bird spider).